Here is a 641-residue protein sequence, read N- to C-terminus: Chaperone protein DnaK (641 aa).

The residue at position 200 (Thr200) is a Phosphothreonine; by autocatalysis. Residues 602–611 (AASSKASAAS) show a composition bias toward low complexity. Residues 602 to 641 (AASSKASAASSPPPPPGAGGQKSDVIDAEFEKVDKDKPQA) form a disordered region. The segment covering 630–641 (EFEKVDKDKPQA) has biased composition (basic and acidic residues).

It belongs to the heat shock protein 70 family.

Functionally, acts as a chaperone. This is Chaperone protein DnaK from Methylacidiphilum infernorum (isolate V4) (Methylokorus infernorum (strain V4)).